The chain runs to 57 residues: U17-myrmicitoxin-Tb1a (57 aa).

The first 29 residues, 1–29 (MEKNRTNIFSVYLMITFLLISIFITMVMS), serve as a signal peptide directing secretion. A propeptide spanning residues 30 to 33 (DGEA) is cleaved from the precursor. A disulfide bond links cysteine 42 and cysteine 53. An Alanine amide modification is found at alanine 56.

In terms of processing, O-glycosylated. Expressed by the venom gland.

Its subcellular location is the secreted. Its function is as follows. Serine protease inhibitor which exhibits antifibrinolytic, antielastolytic and antimicrobial activities. Displays antimicrobial activity against bacteria and fungi. Likely functions in the innate immune response to microbial infection and possibly in the venom, as an antifibrinolytic agent. The protein is U17-myrmicitoxin-Tb1a of Tetramorium bicarinatum (Tramp ant).